The sequence spans 193 residues: Guanylate kinase (193 aa).

A Guanylate kinase-like domain is found at 12-191 (DLLTIVAGPT…AANELWLAMN (180 aa)). 19-26 (GPTAVGKG) is a binding site for ATP.

This sequence belongs to the guanylate kinase family.

It is found in the cytoplasm. The enzyme catalyses GMP + ATP = GDP + ADP. In terms of biological role, essential for recycling GMP and indirectly, cGMP. This is Guanylate kinase from Tropheryma whipplei (strain TW08/27) (Whipple's bacillus).